We begin with the raw amino-acid sequence, 400 residues long: NADH-quinone oxidoreductase subunit D (400 aa).

The protein belongs to the complex I 49 kDa subunit family. NDH-1 is composed of 14 different subunits. Subunits NuoB, C, D, E, F, and G constitute the peripheral sector of the complex.

Its subcellular location is the cell inner membrane. The enzyme catalyses a quinone + NADH + 5 H(+)(in) = a quinol + NAD(+) + 4 H(+)(out). Functionally, NDH-1 shuttles electrons from NADH, via FMN and iron-sulfur (Fe-S) centers, to quinones in the respiratory chain. The immediate electron acceptor for the enzyme in this species is believed to be a menaquinone. Couples the redox reaction to proton translocation (for every two electrons transferred, four hydrogen ions are translocated across the cytoplasmic membrane), and thus conserves the redox energy in a proton gradient. The chain is NADH-quinone oxidoreductase subunit D from Pelodictyon phaeoclathratiforme (strain DSM 5477 / BU-1).